Here is a 276-residue protein sequence, read N- to C-terminus: Putative respiratory nitrate reductase heme subunit ORF7 (276 aa).

Residues methionine 138 and lysine 228 each contribute to the heme b site.

In terms of assembly, probable multiprotein complex; a catalytic heterodimer of an alpha and beta chain is proposed to associate with additional subunits involved in membrane attachment and electron transfer. Heme b serves as cofactor.

It is found in the cell membrane. The respiratory membrane-bound nitrate reductase enzyme complex plays a role in generation of metabolic energy by using nitrate as a terminal electron acceptor during anaerobic conditions. May transfer electrons to the iron-sulfur centers of the catalytic beta subunit. In Haloferax mediterranei (strain ATCC 33500 / DSM 1411 / JCM 8866 / NBRC 14739 / NCIMB 2177 / R-4) (Halobacterium mediterranei), this protein is Putative respiratory nitrate reductase heme subunit ORF7.